The sequence spans 303 residues: uncharacterized protein (303 aa).

The HTH araC/xylS-type domain maps to 183–281 (KDILFYLNNN…GCSPSDYRRQ (99 aa)). 2 consecutive DNA-binding regions (H-T-H motif) follow at residues 200–221 (EQLSKKFRASVSYICHEFTKEY) and 248–271 (QAEISWRVGYENVDHFAKLFLRHV).

This is an uncharacterized protein from Escherichia coli (strain K12).